A 788-amino-acid chain; its full sequence is Autophagy-related protein 9 (788 aa).

The span at 1–14 (MDRDSPFADPDRSD) shows a compositional bias: basic and acidic residues. Disordered regions lie at residues 1–22 (MDRD…PSNT), 87–108 (IGLR…DPED), and 124–153 (NPSA…ASAV). Over 1–195 (MDRDSPFADP…RGAICIALSR (195 aa)) the chain is Cytoplasmic. Positions 97–108 (HGDDADEQDPED) are enriched in acidic residues. The segment covering 125-134 (PSASLSYASN) has biased composition (polar residues). Residues 196–216 (SLNLLTVAFVICFSTFLFGCI) traverse the membrane as a helical segment. At 217–235 (DYSSIRHDGQLSDVIVGHC) the chain is on the lumenal side. Residues 236 to 256 (VAGFSPFATLVVVLLLAAFGW) form a helical membrane-spanning segment. Over 257-416 (QAVQFVLGLS…ADLIEGLRRR (160 aa)) the chain is Cytoplasmic. The disordered stretch occupies residues 307-332 (TTSLSSADEMELGQRTSSSLRRSHPQ). An intramembrane segment occupies 417–437 (FLFMAVVNAIFAPFIVLYLLL). Residues 438 to 500 (YSFFRYFEEY…YMDQFPKEKT (63 aa)) are Cytoplasmic-facing. Residues 501 to 521 (AIVARFVAFVAGSFTAVLLLA) form a helical membrane-spanning segment. Over 522–538 (SVMDPDVFVHFNITPQR) the chain is Lumenal. A helical membrane pass occupies residues 539 to 559 (NVLFYIGVFGAILAVARGMIP). Residues 560–605 (DEHVVFEPEAMLREVIEQTHYLPQDWKGRFHSAQVHQAFGQLYTLK) lie on the Cytoplasmic side of the membrane. Residues 606-626 (IYIFLQELLSVVTTPFVLWLS) lie within the membrane without spanning it. The Cytoplasmic segment spans residues 627–788 (LPACAPDLID…SGGAAGASRW (162 aa)). Disordered stretches follow at residues 668–706 (MGGA…MSQA) and 742–762 (ATTL…PTGV). Residues 679-689 (QQQQQQQQQQQ) show a composition bias toward low complexity.

The protein belongs to the ATG9 family. As to quaternary structure, homotrimer; forms a homotrimer with a central pore that forms a path between the two membrane leaflets. Phosphorylated by ATG1. ATG1 phosphorylation is required for preautophagosome elongation.

The protein resides in the preautophagosomal structure membrane. Its subcellular location is the cytoplasmic vesicle membrane. The protein localises to the golgi apparatus membrane. It is found in the endoplasmic reticulum membrane. It catalyses the reaction a 1,2-diacyl-sn-glycero-3-phosphocholine(in) = a 1,2-diacyl-sn-glycero-3-phosphocholine(out). The catalysed reaction is a 1,2-diacyl-sn-glycero-3-phospho-L-serine(in) = a 1,2-diacyl-sn-glycero-3-phospho-L-serine(out). It carries out the reaction a 1,2-diacyl-sn-glycero-3-phosphoethanolamine(in) = a 1,2-diacyl-sn-glycero-3-phosphoethanolamine(out). The enzyme catalyses a 1,2-diacyl-sn-glycero-3-phospho-(1D-myo-inositol-3-phosphate)(in) = a 1,2-diacyl-sn-glycero-3-phospho-(1D-myo-inositol-3-phosphate)(out). Functionally, phospholipid scramblase involved in autophagy and cytoplasm to vacuole transport (Cvt) vesicle formation. Cycles between the preautophagosomal structure/phagophore assembly site (PAS) and the cytoplasmic vesicle pool and supplies membrane for the growing autophagosome. Lipid scramblase activity plays a key role in preautophagosomal structure/phagophore assembly by distributing the phospholipids that arrive through ATG2 from the cytoplasmic to the luminal leaflet of the bilayer, thereby driving autophagosomal membrane expansion. Required for mitophagy. Also involved in endoplasmic reticulum-specific autophagic process and is essential for the survival of cells subjected to severe ER stress. Different machineries are required for anterograde trafficking to the PAS during either the Cvt pathway or bulk autophagy and for retrograde trafficking. This chain is Autophagy-related protein 9 (ATG9), found in Mycosarcoma maydis (Corn smut fungus).